Consider the following 340-residue polypeptide: Ketol-acid reductoisomerase (NADP(+)) (340 aa).

Residues 2–181 enclose the KARI N-terminal Rossmann domain; the sequence is VKMYYEADVK…GCTKAGVIET (180 aa). NADP(+)-binding positions include 25–28, arginine 48, serine 52, and 82–85; these read YGSQ and DERQ. Histidine 107 is a catalytic residue. Glycine 133 contributes to the NADP(+) binding site. Positions 182–327 constitute a KARI C-terminal knotted domain; sequence SFREETETDL…EQLRGMMSWI (146 aa). Aspartate 190, glutamate 194, glutamate 226, and glutamate 230 together coordinate Mg(2+). Serine 251 is a substrate binding site.

Belongs to the ketol-acid reductoisomerase family. It depends on Mg(2+) as a cofactor.

It carries out the reaction (2R)-2,3-dihydroxy-3-methylbutanoate + NADP(+) = (2S)-2-acetolactate + NADPH + H(+). It catalyses the reaction (2R,3R)-2,3-dihydroxy-3-methylpentanoate + NADP(+) = (S)-2-ethyl-2-hydroxy-3-oxobutanoate + NADPH + H(+). The protein operates within amino-acid biosynthesis; L-isoleucine biosynthesis; L-isoleucine from 2-oxobutanoate: step 2/4. It participates in amino-acid biosynthesis; L-valine biosynthesis; L-valine from pyruvate: step 2/4. Involved in the biosynthesis of branched-chain amino acids (BCAA). Catalyzes an alkyl-migration followed by a ketol-acid reduction of (S)-2-acetolactate (S2AL) to yield (R)-2,3-dihydroxy-isovalerate. In the isomerase reaction, S2AL is rearranged via a Mg-dependent methyl migration to produce 3-hydroxy-3-methyl-2-ketobutyrate (HMKB). In the reductase reaction, this 2-ketoacid undergoes a metal-dependent reduction by NADPH to yield (R)-2,3-dihydroxy-isovalerate. The polypeptide is Ketol-acid reductoisomerase (NADP(+)) (Brevibacillus brevis (strain 47 / JCM 6285 / NBRC 100599)).